A 122-amino-acid chain; its full sequence is Sarcocystatin-A (122 aa).

A signal peptide spans 1 to 20 (MKYVLILCVITLATVAYAQP). Position 21 is a pyrrolidone carboxylic acid (glutamine 21). The Secondary area of contact motif lies at 67 to 71 (QVVSG).

The protein belongs to the cystatin family.

Functionally, selectively inhibits the activity of cysteine proteinase of hemocytes, protecting developing adult tissue in pupae from attack by the proteinase. This Sarcophaga peregrina (Flesh fly) protein is Sarcocystatin-A.